A 161-amino-acid chain; its full sequence is Large ribosomal subunit protein uL29c (161 aa).

The transit peptide at 1–61 directs the protein to the chloroplast; the sequence is MATMSLAAAS…ERRAAAMVAM (61 aa).

The protein belongs to the universal ribosomal protein uL29 family. In terms of assembly, part of the 50S ribosomal subunit.

The protein localises to the plastid. The protein resides in the chloroplast. In Zea mays (Maize), this protein is Large ribosomal subunit protein uL29c (RPL29).